A 159-amino-acid polypeptide reads, in one-letter code: Na(+)/H(+) antiporter subunit E1 (159 aa).

4 consecutive transmembrane segments (helical) span residues Met1–Ser21, Phe27–Gly47, Phe49–Ile69, and Trp101–Val121.

The protein belongs to the CPA3 antiporters (TC 2.A.63) subunit E family. In terms of assembly, may form a heterooligomeric complex that consists of seven subunits: mnhA1, mnhB1, mnhC1, mnhD1, mnhE1, mnhF1 and mnhG1.

The protein localises to the cell membrane. Mnh complex is a Na(+)/H(+) antiporter involved in Na(+) excretion. The chain is Na(+)/H(+) antiporter subunit E1 (mnhE1) from Staphylococcus aureus (strain bovine RF122 / ET3-1).